The following is a 469-amino-acid chain: Zinc transporter SLC39A7 (469 aa).

The chain crosses the membrane as a helical span at residues 10–30; that stretch reads WVAVGLLTWATLGLLVAELGG. 2 stretches are compositionally biased toward basic and acidic residues: residues 42–56 and 66–114; these read FHGHSHRHSHEDFHH and HTHE…EHSR. A disordered region spans residues 42 to 121; the sequence is FHGHSHRHSH…HSRGGYGESG (80 aa). Histidine 66 is subject to Pros-methylhistidine. A run of 3 helical transmembrane segments spans residues 138-158, 169-189, and 214-234; these read ALGATVLISAAPFFVLFLIPV, LQILLSFASGGLLGDAFLHLI, and GPILSVGLWVLSGIVAFLVVE. Residues 242–263 show a composition bias toward basic residues; the sequence is GGHGHSHGHGHAHSHTHGSHGH. The tract at residues 242 to 310 is disordered; the sequence is GGHGHSHGHG…VRPQNAEEEK (69 aa). The segment covering 264–285 has biased composition (basic and acidic residues); it reads GRQECSTKEKQSSEEEEKETRG. 2 positions are modified to phosphoserine: serine 275 and serine 276. Helical transmembrane passes span 386-406, 410-430, and 448-468; these read LTAVGALAGTACALLTEGGAV, IAGGAGPGWVLPFTAGGFIYV, and SLLEVLGLLGGVVMMVLIAHL.

Belongs to the ZIP transporter (TC 2.A.5) family. KE4/Catsup subfamily. Homodimer. Post-translationally, methylation at some His residue by METTL9 leads to reduced zinc-binding. Rapidly phosphorylated by CK2 following Zn(2+) treatment. This phosphorylation is required for efficient cytosolic Zn(2+) release.

The protein resides in the endoplasmic reticulum membrane. The protein localises to the golgi apparatus. It is found in the cis-Golgi network membrane. The catalysed reaction is Zn(2+)(in) = Zn(2+)(out). In terms of biological role, transports Zn(2+) from the endoplasmic reticulum (ER)/Golgi apparatus to the cytosol, playing an essential role in the regulation of cytosolic zinc levels. Acts as a gatekeeper of zinc release from intracellular stores, requiring post-translational activation by phosphorylation, resulting in activation of multiple downstream pathways leading to cell growth and proliferation. Has an essential role in B cell development and is required for proper B cell receptor signaling. Plays an important role in maintaining intestinal epithelial homeostasis and skin dermis development by regulating ER function. Controls cell signaling pathways involved in glucose metabolism in skeletal muscle. Has a protective role against ER stress in different biological contexts. Mediates Zn(2+)-induced ferroptosis. The chain is Zinc transporter SLC39A7 from Pongo abelii (Sumatran orangutan).